The following is a 246-amino-acid chain: 14-3-3 protein beta/alpha (246 aa).

The residue at position 1 (Met1) is an N-acetylmethionine. Position 2 is an N-acetylthreonine; in 14-3-3 protein beta/alpha, N-terminally processed (Thr2). Thr2 is modified (phosphothreonine). An N6-acetyllysine modification is found at Lys5. Lys51 carries the N6-acetyllysine; alternate modification. A Glycyl lysine isopeptide (Lys-Gly) (interchain with G-Cter in SUMO2); alternate cross-link involves residue Lys51. Ser60 carries the phosphoserine modification. Lys70 carries the N6-acetyllysine modification. Residues Tyr84 and Tyr106 each carry the 3'-nitrotyrosine modification. The residue at position 117 (Lys117) is an N6-acetyllysine. Residues Ser186 and Ser232 each carry the phosphoserine modification.

This sequence belongs to the 14-3-3 family. In terms of assembly, homodimer. Interacts with SAMSN1 and PRKCE. Interacts with AKAP13. Interacts with SSH1 and TORC2/CRTC2. Interacts with ABL1; the interaction results in cytoplasmic location of ABL1 and inhibition of cABL-mediated apoptosis. Interacts with ROR2 (dimer); the interaction results in phosphorylation of YWHAB on tyrosine residues. Interacts with GAB2. Interacts with YAP1 (phosphorylated form). Interacts with the phosphorylated (by AKT1) form of SRPK2. Interacts with PKA-phosphorylated AANAT. Interacts with MYO1C. Interacts with SIRT2. Interacts with the 'Thr-369' phosphorylated form of DAPK2. Interacts with PI4KB, TBC1D22A and TBC1D22B. Interacts with the 'Ser-1134' and 'Ser-1161' phosphorylated form of SOS1. Interacts (via phosphorylated form) with YWHAB; this interaction occurs in a protein kinase AKT1-dependent manner. Interacts with SLITRK1. Interacts with SYNPO2 (phosphorylated form); YWHAB competes with ACTN2 for interaction with SYNPO2. Interacts with RIPOR2 (via phosphorylated form); this interaction occurs in a chemokine-dependent manner and does not compete for binding of RIPOR2 with RHOA nor blocks inhibition of RIPOR2-mediated RHOA activity. Interacts with MARK2 and MARK3. Interacts with TESK1; the interaction is dependent on the phosphorylation of TESK1 'Ser-439' and inhibits TESK1 kinase activity. Interacts with MEFV. Interacts with HDAC4. Interacts with ADAM22 (via C-terminus). Post-translationally, the alpha, brain-specific form differs from the beta form in being phosphorylated. Phosphorylated on Ser-60 by protein kinase C delta type catalytic subunit in a sphingosine-dependent fashion.

Its subcellular location is the cytoplasm. The protein localises to the melanosome. Functionally, adapter protein implicated in the regulation of a large spectrum of both general and specialized signaling pathways. Binds to a large number of partners, usually by recognition of a phosphoserine or phosphothreonine motif. Binding generally results in the modulation of the activity of the binding partner. Negative regulator of osteogenesis. Blocks the nuclear translocation of the phosphorylated form (by AKT1) of SRPK2 and antagonizes its stimulatory effect on cyclin D1 expression resulting in blockage of neuronal apoptosis elicited by SRPK2. Negative regulator of signaling cascades that mediate activation of MAP kinases via AKAP13. This chain is 14-3-3 protein beta/alpha (YWHAB), found in Bos taurus (Bovine).